The primary structure comprises 311 residues: tRNA pseudouridine synthase B (311 aa).

Asp-39 functions as the Nucleophile in the catalytic mechanism. The tract at residues 237-268 (RELSEQETTEISFGRRIAAGPGAGTPDAATAE) is disordered. The segment covering 254–268 (AAGPGAGTPDAATAE) has biased composition (low complexity).

The protein belongs to the pseudouridine synthase TruB family. Type 1 subfamily.

It carries out the reaction uridine(55) in tRNA = pseudouridine(55) in tRNA. In terms of biological role, responsible for synthesis of pseudouridine from uracil-55 in the psi GC loop of transfer RNAs. The chain is tRNA pseudouridine synthase B from Paenarthrobacter aurescens (strain TC1).